The sequence spans 125 residues: MDKKSAALYKKMQAEIESYQNLQKSCLKMVKQRAVLESQLNENKCVLDELNLLGPDNKVYKLFGPVLVKQELEESRQNVGKRIEYISKELKSSTDALENMEKDMLKHRESVAKYQQQCQVAAAMQ.

Belongs to the prefoldin subunit beta family. Heterohexamer of two PFD-alpha type and four PFD-beta type subunits.

Functionally, binds specifically to cytosolic chaperonin (c-CPN) and transfers target proteins to it. Binds to nascent polypeptide chain and promotes folding in an environment in which there are many competing pathways for nonnative proteins. The protein is Probable prefoldin subunit 6 of Drosophila melanogaster (Fruit fly).